The sequence spans 447 residues: Argininosuccinate lyase (447 aa).

Belongs to the lyase 1 family. Argininosuccinate lyase subfamily.

It localises to the cytoplasm. The enzyme catalyses 2-(N(omega)-L-arginino)succinate = fumarate + L-arginine. Its pathway is amino-acid biosynthesis; L-arginine biosynthesis; L-arginine from L-ornithine and carbamoyl phosphate: step 3/3. The polypeptide is Argininosuccinate lyase (Bacteroides fragilis (strain YCH46)).